Here is a 615-residue protein sequence, read N- to C-terminus: DNA mismatch repair protein MutL (615 aa).

The disordered stretch occupies residues 363-397; that stretch reads FAEPAAREPVAPRYTPAPASGSRPAAPWPNAQPGY. Residues 364–391 are compositionally biased toward low complexity; that stretch reads AEPAAREPVAPRYTPAPASGSRPAAPWP.

It belongs to the DNA mismatch repair MutL/HexB family.

Functionally, this protein is involved in the repair of mismatches in DNA. It is required for dam-dependent methyl-directed DNA mismatch repair. May act as a 'molecular matchmaker', a protein that promotes the formation of a stable complex between two or more DNA-binding proteins in an ATP-dependent manner without itself being part of a final effector complex. The polypeptide is DNA mismatch repair protein MutL (Escherichia coli (strain K12 / MC4100 / BW2952)).